A 950-amino-acid chain; its full sequence is MORC family CW-type zinc finger protein 1 (950 aa).

Residues 281-342 (KGKFKTEVQK…TKHKSLRQKQ (62 aa)) are a coiled coil. The CW-type zinc finger occupies 465–530 (SLESLQWRRR…SCNQIERLPS (66 aa)). Residues Cys485, Cys488, Cys511, and Cys522 each contribute to the Zn(2+) site. Disordered regions lie at residues 532-551 (PLGTVNRRPPSKDERERQLQ) and 679-700 (KKQQSESLVQAGKASTDVASSR). The segment covering 541-550 (PSKDERERQL) has biased composition (basic and acidic residues). Residues 885–916 (LGQCELKRKRTEEKLSDLRAKLALLLQKLQLG) are a coiled coil.

In terms of tissue distribution, expressed at very low level in male germ cells.

It is found in the nucleus. Functionally, required for spermatogenesis. Essential for de novo DNA methylation and silencing of transposable elements in the male embryonic germ cells. Not required for piRNA biosynthesis. The polypeptide is MORC family CW-type zinc finger protein 1 (Mus musculus (Mouse)).